A 348-amino-acid chain; its full sequence is Abnormal cell lineage protein 44 (348 aa).

The first 25 residues, Met1–Ala25, serve as a signal peptide directing secretion. Disulfide bonds link Cys91–Cys102, Cys141–Cys149, Cys151–Cys165, Cys213–Cys227, Cys215–Cys222, Cys272–Cys299, Cys282–Cys294, Cys298–Cys338, Cys314–Cys329, Cys316–Cys326, and Cys321–Cys322. Residue Ser219 is the site of O-palmitoleoyl serine; by mom-1 attachment. Asn286 carries N-linked (GlcNAc...) asparagine glycosylation.

This sequence belongs to the Wnt family. In terms of processing, palmitoleoylation is required for efficient binding to frizzled receptors. Depalmitoleoylation leads to Wnt signaling pathway inhibition. As to expression, expressed in the tail hypodermis.

It localises to the secreted. It is found in the extracellular space. The protein localises to the extracellular matrix. Its function is as follows. Ligand for members of the frizzled family of seven transmembrane receptors. Affects male tail development, vulval precursor cell specification and egg laying. Involved in morphogenesis by influencing polarity of asymmetric cell divisions of the B, U, and F cells in the male, and the T cell in males and hermaphrodites. Controls spindle orientation in B-gamma cell division during male copulatory spicule development. Involved in specification of the P7.p lineage during vulval development. Has a role in providing polarity and default lin-17 localization in axon development and positioning of neuromuscular synapses in DA9 regions by negatively regulating synaptogenesis. Plays a role in motorneuron development by promoting the extension of the anterior neurite of ventral D-type GABAergic motorneurons along the anterior-posterior axis of the ventral nerve cord. Positively regulates cilium position and dendrite morphogenesis in postembryonic PQR gas-sensing neurons. This is likely through regulating the localization of grdn-1 to the distal dendrites of PQR sensory neurons. This Caenorhabditis elegans protein is Abnormal cell lineage protein 44.